We begin with the raw amino-acid sequence, 232 residues long: 2,3-bisphosphoglycerate-dependent phosphoglycerate mutase (232 aa).

Substrate-binding positions include 10–17, 23–24, Arg62, 89–92, Lys100, 116–117, and 185–186; these read RHGESQWN, TG, ERHY, RR, and GN. The active-site Tele-phosphohistidine intermediate is His11. Glu89 serves as the catalytic Proton donor/acceptor.

The protein belongs to the phosphoglycerate mutase family. BPG-dependent PGAM subfamily. As to quaternary structure, homodimer.

It carries out the reaction (2R)-2-phosphoglycerate = (2R)-3-phosphoglycerate. It participates in carbohydrate degradation; glycolysis; pyruvate from D-glyceraldehyde 3-phosphate: step 3/5. Functionally, catalyzes the interconversion of 2-phosphoglycerate and 3-phosphoglycerate. This Blochmanniella floridana protein is 2,3-bisphosphoglycerate-dependent phosphoglycerate mutase.